The following is a 287-amino-acid chain: HTH-type transcriptional regulator MurR (287 aa).

The region spanning 1–77 (MLYLAKMRNA…MALIEEYSVN (77 aa)) is the HTH rpiR-type domain. The segment at residues 37–56 (SRNLAKQLEVSQSSIVKFAQ) is a DNA-binding region (H-T-H motif). Residues 128-268 (VINLISKARL…FVGMVQLNDV (141 aa)) form the SIS domain.

As to quaternary structure, homotetramer.

Its pathway is amino-sugar metabolism; N-acetylmuramate degradation [regulation]. Represses the expression of the murPQ operon involved in the uptake and degradation of N-acetylmuramic acid (MurNAc). Binds to two adjacent inverted repeats within the operator region. MurNAc 6-phosphate, the substrate of MurQ, is the specific inducer that weakens binding of MurR to the operator. The protein is HTH-type transcriptional regulator MurR of Citrobacter koseri (strain ATCC BAA-895 / CDC 4225-83 / SGSC4696).